The chain runs to 199 residues: A-type ATP synthase subunit E (199 aa).

The protein belongs to the V-ATPase E subunit family. Has multiple subunits with at least A(3), B(3), C, D, E, F, H, I and proteolipid K(x).

It is found in the cell membrane. Component of the A-type ATP synthase that produces ATP from ADP in the presence of a proton gradient across the membrane. The chain is A-type ATP synthase subunit E from Pyrococcus abyssi (strain GE5 / Orsay).